The chain runs to 297 residues: B-lymphocyte antigen CD20 (297 aa).

Topologically, residues 1–56 (MTTPRNSVNGTFPAEPMKGPIAMQSGPKPLFRRMSSLVGPTQSFFMRESKTLGAVQ) are cytoplasmic. Residue Ser-36 is modified to Phosphoserine. The chain crosses the membrane as a helical span at residues 57-78 (IMNGLFHIALGGLLMIPAGIYA). Positions 74-80 (AGIYAPI) are epitope 1. Residues 79–84 (PICVTV) are Extracellular-facing. The chain crosses the membrane as a helical span at residues 85-105 (WYPLWGGIMYIISGSLLAATE). Residues 106-120 (KNSRKCLVKGKMIMN) are Cytoplasmic-facing. A lipid anchor (S-palmitoyl cysteine) is attached at Cys-111. The chain crosses the membrane as a helical span at residues 121–141 (SLSLFAAISGMILSIMDILNI). At 142-188 (KISHFLKMESLNFIRAHTPYINIYNCEPANPSEKNSPSTQYCYSIQS) the chain is on the extracellular side. Positions 146–160 (FLKMESLNFIRAHTP) are epitope 2. An intrachain disulfide couples Cys-167 to Cys-183. The segment at 168–175 (EPANPSEK) is epitope 3 (recognized by antibodies, including Rituximab). Residues 189-209 (LFLGILSVMLIFAFFQELVIA) traverse the membrane as a helical segment. At 210–297 (GIVENEWKRT…SSPIENDSSP (88 aa)) the chain is on the cytoplasmic side. Residue Cys-220 is the site of S-palmitoyl cysteine attachment. A Phosphoserine modification is found at Ser-225. The residue at position 239 (Thr-239) is a Phosphothreonine. A disordered region spans residues 247-297 (VGLTETSSQPKNEEDIEIIPIQEEEEEETETNFPEPPQDQESSPIENDSSP). The segment covering 260–276 (EDIEIIPIQEEEEEETE) has biased composition (acidic residues). The segment covering 285–297 (DQESSPIENDSSP) has biased composition (polar residues).

Belongs to the MS4A family. Forms homotetramers. Interacts with the heavy and light chains of cell surface IgM, the antigen-binding components of the BCR. Post-translationally, phosphorylated on serines and threonines in resting B-cells. Protein kinase C/PKC can use CD20 as substrate. As to expression, expressed on B-cells.

It localises to the cell membrane. Its function is as follows. B-lymphocyte-specific membrane protein that plays a role in the regulation of cellular calcium influx necessary for the development, differentiation, and activation of B-lymphocytes. Functions as a store-operated calcium (SOC) channel component promoting calcium influx after activation by the B-cell receptor/BCR. The sequence is that of B-lymphocyte antigen CD20 (MS4A1) from Homo sapiens (Human).